The sequence spans 154 residues: PTS system fructose-specific EIIA component (154 aa).

The PTS EIIA type-2 domain occupies 8–152 (TITPLELISL…QTVQDVLAEV (145 aa)). Catalysis depends on histidine 70, which acts as the Tele-phosphohistidine intermediate. Histidine 70 carries the post-translational modification Phosphohistidine; by HPr.

The protein localises to the cytoplasm. In terms of biological role, the phosphoenolpyruvate-dependent sugar phosphotransferase system (sugar PTS), a major carbohydrate active transport system, catalyzes the phosphorylation of incoming sugar substrates concomitantly with their translocation across the cell membrane. The enzyme II PtfABC PTS system is involved in fructose transport. This chain is PTS system fructose-specific EIIA component, found in Haloferax volcanii (strain ATCC 29605 / DSM 3757 / JCM 8879 / NBRC 14742 / NCIMB 2012 / VKM B-1768 / DS2) (Halobacterium volcanii).